A 145-amino-acid polypeptide reads, in one-letter code: Large ribosomal subunit protein uL13 (145 aa).

Belongs to the universal ribosomal protein uL13 family. Part of the 50S ribosomal subunit.

In terms of biological role, this protein is one of the early assembly proteins of the 50S ribosomal subunit, although it is not seen to bind rRNA by itself. It is important during the early stages of 50S assembly. The protein is Large ribosomal subunit protein uL13 of Listeria monocytogenes serotype 4b (strain CLIP80459).